Consider the following 362-residue polypeptide: Isopentenyl-diphosphate delta-isomerase (362 aa).

Residue 5-6 (RK) participates in substrate binding. FMN is bound by residues 63 to 65 (AMT), serine 93, and asparagine 122. Glutamine 152 is a binding site for substrate. Glutamate 153 serves as a coordination point for Mg(2+). Residues lysine 184, threonine 214, 259-261 (GIR), and 280-281 (AG) each bind FMN.

It belongs to the IPP isomerase type 2 family. Homooctamer. Dimer of tetramers. Requires FMN as cofactor. It depends on NADPH as a cofactor. Mg(2+) serves as cofactor.

Its subcellular location is the cytoplasm. The catalysed reaction is isopentenyl diphosphate = dimethylallyl diphosphate. Involved in the biosynthesis of isoprenoids. Catalyzes the 1,3-allylic rearrangement of the homoallylic substrate isopentenyl (IPP) to its allylic isomer, dimethylallyl diphosphate (DMAPP). The protein is Isopentenyl-diphosphate delta-isomerase of Nocardia farcinica (strain IFM 10152).